The primary structure comprises 249 residues: Large ribosomal subunit protein uL16m (249 aa).

Belongs to the universal ribosomal protein uL16 family. Component of the mitochondrial large ribosomal subunit (mt-LSU). Mature N.crassa 74S mitochondrial ribosomes consist of a small (37S) and a large (54S) subunit. The 37S small subunit contains a 16S ribosomal RNA (16S mt-rRNA) and 32 different proteins. The 54S large subunit contains a 23S rRNA (23S mt-rRNA) and 42 different proteins.

It localises to the mitochondrion. Its function is as follows. Component of the mitochondrial ribosome (mitoribosome), a dedicated translation machinery responsible for the synthesis of mitochondrial genome-encoded proteins, including at least some of the essential transmembrane subunits of the mitochondrial respiratory chain. The mitoribosomes are attached to the mitochondrial inner membrane and translation products are cotranslationally integrated into the membrane. This is Large ribosomal subunit protein uL16m (mrpl16) from Neurospora crassa (strain ATCC 24698 / 74-OR23-1A / CBS 708.71 / DSM 1257 / FGSC 987).